A 421-amino-acid polypeptide reads, in one-letter code: Testin (421 aa).

Residues 92–199 (MILTNPVAAK…GDVKLPRDMN (108 aa)) enclose the PET domain. Disordered regions lie at residues 133-164 (EKQP…PSKC) and 193-213 (KLPR…GGDR). Positions 155–164 (PAHDQDPSKC) are enriched in basic and acidic residues. LIM zinc-binding domains lie at 234–297 (YSCY…CDSE), 299–359 (PRCA…NHAV), and 362–421 (QGCH…KMMS).

It belongs to the prickle / espinas / testin family. In terms of assembly, interacts via LIM domain 1 with ZYX. Interacts (via LIM domain 3) with ENAH and VASP. Interacts with ALKBH4, talin, actin, alpha-actinin, GRIP1 and PXN. Interacts (via LIM domain 2) with ACTL7A (via N-terminus). Heterodimer with ACTL7A; the heterodimer interacts with ENAH to form a heterotrimer.

Its subcellular location is the cytoplasm. The protein resides in the cell junction. It is found in the focal adhesion. Functionally, scaffold protein that may play a role in cell adhesion, cell spreading and in the reorganization of the actin cytoskeleton. Plays a role in the regulation of cell proliferation. May act as a tumor suppressor. The chain is Testin (TES) from Muntiacus muntjak (Barking deer).